Consider the following 310-residue polypeptide: Mitochondrial citrate transporter F (310 aa).

Solcar repeat units follow at residues 23–108, 115–207, and 216–303; these read KKVH…LKNH, PPGL…FKRL, and DNMG…HKKL. 6 helical membrane-spanning segments follow: residues 29–49, 85–105, 122–142, 186–206, 222–242, and 275–296; these read FWFGGSASCFAAAVTHPLDLV, SAAILRQLTYSTTRFGIYEEL, IGMASASGFIGGMAGNPADVL, NSTRAVLMTTSQLASYDTFKR, FTASFMAGFVATTVCSPVDVI, and AFRGWVPSFIRLGPHTIATFIF.

Belongs to the mitochondrial carrier (TC 2.A.29) family.

The protein localises to the mitochondrion inner membrane. In terms of biological role, mitochondrial transporter that does not mediate citrate export from mitochondria to cytoplasm. Its exact function has still to be determined. In Aspergillus niger (strain ATCC 1015 / CBS 113.46 / FGSC A1144 / LSHB Ac4 / NCTC 3858a / NRRL 328 / USDA 3528.7), this protein is Mitochondrial citrate transporter F.